Reading from the N-terminus, the 376-residue chain is Beta sliding clamp (376 aa).

The protein belongs to the beta sliding clamp family. In terms of assembly, forms a ring-shaped head-to-tail homodimer around DNA which binds and tethers DNA polymerases and other proteins to the DNA. The DNA replisome complex has a single clamp-loading complex (3 tau and 1 each of delta, delta', psi and chi subunits) which binds 3 Pol III cores (1 core on the leading strand and 2 on the lagging strand) each with a beta sliding clamp dimer. Additional proteins in the replisome are other copies of gamma, psi and chi, Ssb, DNA helicase and RNA primase.

It localises to the cytoplasm. Functionally, confers DNA tethering and processivity to DNA polymerases and other proteins. Acts as a clamp, forming a ring around DNA (a reaction catalyzed by the clamp-loading complex) which diffuses in an ATP-independent manner freely and bidirectionally along dsDNA. Initially characterized for its ability to contact the catalytic subunit of DNA polymerase III (Pol III), a complex, multichain enzyme responsible for most of the replicative synthesis in bacteria; Pol III exhibits 3'-5' exonuclease proofreading activity. The beta chain is required for initiation of replication as well as for processivity of DNA replication. In Streptomyces coelicolor (strain ATCC BAA-471 / A3(2) / M145), this protein is Beta sliding clamp (dnaN).